A 718-amino-acid polypeptide reads, in one-letter code: Polyribonucleotide nucleotidyltransferase (718 aa).

Residues D497 and D503 each coordinate Mg(2+). Residues 564 to 623 enclose the KH domain; the sequence is PRLLTMRIDPDMIGLVIGPGGKTVKSITEQTKTKIDIDDDGTVTISASEAEQAERAKQLI. The S1 motif domain occupies 633–701; the sequence is GEVYVGRVTR…NKGRLNLTRL (69 aa).

Belongs to the polyribonucleotide nucleotidyltransferase family. Requires Mg(2+) as cofactor.

Its subcellular location is the cytoplasm. The catalysed reaction is RNA(n+1) + phosphate = RNA(n) + a ribonucleoside 5'-diphosphate. Involved in mRNA degradation. Catalyzes the phosphorolysis of single-stranded polyribonucleotides processively in the 3'- to 5'-direction. The protein is Polyribonucleotide nucleotidyltransferase of Gloeothece citriformis (strain PCC 7424) (Cyanothece sp. (strain PCC 7424)).